We begin with the raw amino-acid sequence, 188 residues long: Probable RNA 2'-phosphotransferase (188 aa).

This sequence belongs to the KptA/TPT1 family.

Removes the 2'-phosphate from RNA via an intermediate in which the phosphate is ADP-ribosylated by NAD followed by a presumed transesterification to release the RNA and generate ADP-ribose 1''-2''-cyclic phosphate (APPR&gt;P). May function as an ADP-ribosylase. This is Probable RNA 2'-phosphotransferase from Lacticaseibacillus paracasei (strain ATCC 334 / BCRC 17002 / CCUG 31169 / CIP 107868 / KCTC 3260 / NRRL B-441) (Lactobacillus paracasei).